The sequence spans 1214 residues: Reverse gyrase (1214 aa).

The segment at 1–37 (MKAIYRDMCPNCRGAITDERLAAKNPCDACLDEPISM) adopts an RG N-terminal-type zinc-finger fold. Zn(2+)-binding residues include Cys-9, Cys-12, Cys-27, and Cys-30. ATP contacts are provided by residues Gln-89 and 106–113 (APTGMGKS). Residues 93-252 (VKRIIKGKSF…WEIIKLKKQL (160 aa)) form the Helicase ATP-binding domain. Positions 213-216 (DDVD) match the DEAD box motif. The segment at 635–1214 (DLVKSALMIV…YEEILRYVKS (580 aa)) is topoisomerase I. Residues 639-802 (SALMIVESPN…VIKRIEFHEV (164 aa)) enclose the Toprim domain. Glu-645 is a binding site for Mg(2+). Residues 719–748 (IKRCRDCGHQFVDWEEKGVCPRCGSRNVYD) form an RG C-terminal-type zinc finger. Cys-722, Cys-725, Cys-738, and Cys-741 together coordinate Zn(2+). Asp-771 lines the Mg(2+) pocket. The Topo IA-type catalytic domain maps to 818-1212 (NEDRVNAQLV…ELYEEILRYV (395 aa)). Tyr-955 serves as the catalytic O-(5'-phospho-DNA)-tyrosine intermediate.

The protein in the N-terminal section; belongs to the DEAD box helicase family. DDVD subfamily. This sequence in the C-terminal section; belongs to the type IA topoisomerase family. As to quaternary structure, monomer. It depends on Zn(2+) as a cofactor. Mg(2+) serves as cofactor.

The protein localises to the cytoplasm. It carries out the reaction ATP + H2O = ADP + phosphate + H(+). Functionally, modifies the topological state of DNA by introducing positive supercoils in an ATP-dependent process. Increases the linking number in steps of +1. Binds to single-stranded DNA, transiently cleaves and then rejoins the ends, introducing a positive supercoil in the process. The scissile phosphodiester is attacked by the catalytic tyrosine of the enzyme, resulting in the formation of a DNA-(5'-phosphotyrosyl)-enzyme intermediate. Probably involved in rewinding DNA strands in regions of the chromosome that have opened up to allow replication, transcription, DNA repair and/or for DNA protection. This Pyrococcus furiosus (strain ATCC 43587 / DSM 3638 / JCM 8422 / Vc1) protein is Reverse gyrase.